The following is a 492-amino-acid chain: UDP-N-acetylmuramyl-tripeptide synthetase 2 (492 aa).

S30 contributes to the UDP-N-acetyl-alpha-D-muramoyl-L-alanyl-D-glutamate binding site. 111 to 117 (GTNGKTT) is a binding site for ATP. Residues 154-155 (TT), S181, Q187, and R189 each bind UDP-N-acetyl-alpha-D-muramoyl-L-alanyl-D-glutamate. Residue K221 is modified to N6-carboxylysine.

It belongs to the MurCDEF family. MurE subfamily. Post-translationally, carboxylation is probably crucial for Mg(2+) binding and, consequently, for the gamma-phosphate positioning of ATP.

The protein localises to the cytoplasm. It participates in cell wall biogenesis; peptidoglycan biosynthesis. Its function is as follows. Catalyzes the addition of an amino acid to the nucleotide precursor UDP-N-acetylmuramoyl-L-alanyl-D-glutamate (UMAG) in the biosynthesis of bacterial cell-wall peptidoglycan. This chain is UDP-N-acetylmuramyl-tripeptide synthetase 2, found in Oceanobacillus iheyensis (strain DSM 14371 / CIP 107618 / JCM 11309 / KCTC 3954 / HTE831).